A 519-amino-acid chain; its full sequence is MFKSGISAFARTARPSFAAASRRAVRPAALNLRAPALSRFASSAGVGDGKIYQVIGAVVDVKFDTDKLPPILNALETQNNGQKLVLEVSQHLGENVVRCIAMDGTEGLVRGAKASDTGAPITIPVGPATLGRIINVTGDPIDERGPIKTDKFRPIHAEAPEFVEQSTTAEILVTGIKVVDLLAPYARGGKIGLFGGAGVGKTVFIQELINNIAKAHGGYSVFTGVGERTREGNDLYHEMQETSVIQLDGDSKVALVFGQMNEPPGARARVALTGLTIAEYFRDEEGQDVLLFIDNIFRFTQAGSEVSALLGRIPSAVGYQPTLAVDMGQMQERITTTTKGSITSVQAVYVPADDLTDPAPATTFAHLDATTVLSRGISELGIYPAVDPLDSKSRMLDPRIVGQEHYETATRVQQILQEYKSLQDIIAILGMDELSEADKLTVERARKIQRFLSQPFTVAQVFTGIEGKLVDLKDTIASFKAILAGEGDDLPEGAFYMVGDFASARAKGEKILAELEGQA.

195 to 202 provides a ligand contact to ATP; the sequence is GGAGVGKT.

This sequence belongs to the ATPase alpha/beta chains family. In terms of assembly, F-type ATPases have 2 components, CF(1) - the catalytic core - and CF(0) - the membrane proton channel. CF(1) has five subunits: alpha(3), beta(3), gamma(1), delta(1), epsilon(1). CF(0) has three main subunits: a, b and c.

Its subcellular location is the mitochondrion. The protein localises to the mitochondrion inner membrane. The enzyme catalyses ATP + H2O + 4 H(+)(in) = ADP + phosphate + 5 H(+)(out). Mitochondrial membrane ATP synthase (F(1)F(0) ATP synthase or Complex V) produces ATP from ADP in the presence of a proton gradient across the membrane which is generated by electron transport complexes of the respiratory chain. F-type ATPases consist of two structural domains, F(1) - containing the extramembraneous catalytic core, and F(0) - containing the membrane proton channel, linked together by a central stalk and a peripheral stalk. During catalysis, ATP synthesis in the catalytic domain of F(1) is coupled via a rotary mechanism of the central stalk subunits to proton translocation. Subunits alpha and beta form the catalytic core in F(1). Rotation of the central stalk against the surrounding alpha(3)beta(3) subunits leads to hydrolysis of ATP in three separate catalytic sites on the beta subunits. The chain is ATP synthase subunit beta, mitochondrial (atp-2) from Neurospora crassa (strain ATCC 24698 / 74-OR23-1A / CBS 708.71 / DSM 1257 / FGSC 987).